The sequence spans 890 residues: Bacteriocin BCN5 (890 aa).

SH3b domains are found at residues 22-84 (PPNA…TNAT) and 179-241 (ENNA…TNAT). The Peptidase M14 domain maps to 303–549 (GYVKYEGAAA…RYLQKIINAV (247 aa)). 3 residues coordinate Zn(2+): H358, E361, and H475. The Proton donor/acceptor role is filled by E525. The SH3b 3 domain occupies 572 to 636 (EATGEVINVQ…VNSGYIIILK (65 aa)). Positions 815–869 (KALAAAVIVNGVETMFCAFLGGFIAQCIAPEFPIVAAVAGAIVSAIAAFAIGYFV) are hydrophobic.

Zn(2+) serves as cofactor.

In terms of biological role, may function as an ionophore. This is Bacteriocin BCN5 (bcn) from Clostridium perfringens.